A 344-amino-acid polypeptide reads, in one-letter code: tRNA N6-adenosine threonylcarbamoyltransferase (344 aa).

Fe cation is bound by residues histidine 113 and histidine 117. Substrate contacts are provided by residues 135–139, aspartate 169, glycine 182, aspartate 186, and asparagine 278; that span reads LVSGG. Aspartate 306 serves as a coordination point for Fe cation.

It belongs to the KAE1 / TsaD family. It depends on Fe(2+) as a cofactor.

It localises to the cytoplasm. It catalyses the reaction L-threonylcarbamoyladenylate + adenosine(37) in tRNA = N(6)-L-threonylcarbamoyladenosine(37) in tRNA + AMP + H(+). Required for the formation of a threonylcarbamoyl group on adenosine at position 37 (t(6)A37) in tRNAs that read codons beginning with adenine. Is involved in the transfer of the threonylcarbamoyl moiety of threonylcarbamoyl-AMP (TC-AMP) to the N6 group of A37, together with TsaE and TsaB. TsaD likely plays a direct catalytic role in this reaction. This Corynebacterium efficiens (strain DSM 44549 / YS-314 / AJ 12310 / JCM 11189 / NBRC 100395) protein is tRNA N6-adenosine threonylcarbamoyltransferase.